The chain runs to 303 residues: mRNA-capping enzyme subunit beta (303 aa).

Belongs to the fungal TPase family. Heterodimer. The mRNA-capping enzyme is composed of two separate chains alpha and beta, respectively a mRNA guanylyltransferase and an mRNA 5'-triphosphate monophosphatase. It depends on Mg(2+) as a cofactor.

It is found in the nucleus. The enzyme catalyses a 5'-end triphospho-ribonucleoside in mRNA + H2O = a 5'-end diphospho-ribonucleoside in mRNA + phosphate + H(+). Its function is as follows. First step of mRNA capping. Converts the 5'-triphosphate end of a nascent mRNA chain into a diphosphate end. In Schizosaccharomyces pombe (strain 972 / ATCC 24843) (Fission yeast), this protein is mRNA-capping enzyme subunit beta (pct1).